Reading from the N-terminus, the 683-residue chain is DNA-directed RNA polymerase subunit beta' (683 aa).

Positions 69, 71, 87, and 90 each coordinate Zn(2+). Mg(2+) contacts are provided by D489, D491, and D493.

The protein belongs to the RNA polymerase beta' chain family. RpoC1 subfamily. In terms of assembly, in plastids the minimal PEP RNA polymerase catalytic core is composed of four subunits: alpha, beta, beta', and beta''. When a (nuclear-encoded) sigma factor is associated with the core the holoenzyme is formed, which can initiate transcription. Mg(2+) serves as cofactor. It depends on Zn(2+) as a cofactor.

The protein localises to the plastid. Its subcellular location is the chloroplast. It carries out the reaction RNA(n) + a ribonucleoside 5'-triphosphate = RNA(n+1) + diphosphate. DNA-dependent RNA polymerase catalyzes the transcription of DNA into RNA using the four ribonucleoside triphosphates as substrates. This is DNA-directed RNA polymerase subunit beta' from Triticum aestivum (Wheat).